The sequence spans 89 residues: Small ribosomal subunit protein uS15 (89 aa).

The protein belongs to the universal ribosomal protein uS15 family. Part of the 30S ribosomal subunit. Forms a bridge to the 50S subunit in the 70S ribosome, contacting the 23S rRNA.

Its function is as follows. One of the primary rRNA binding proteins, it binds directly to 16S rRNA where it helps nucleate assembly of the platform of the 30S subunit by binding and bridging several RNA helices of the 16S rRNA. In terms of biological role, forms an intersubunit bridge (bridge B4) with the 23S rRNA of the 50S subunit in the ribosome. In Lactobacillus johnsonii (strain CNCM I-12250 / La1 / NCC 533), this protein is Small ribosomal subunit protein uS15.